We begin with the raw amino-acid sequence, 133 residues long: Large-conductance mechanosensitive channel (133 aa).

2 consecutive transmembrane segments (helical) span residues 19-39 (IDLA…TSLV) and 79-99 (IQSV…VKLI).

The protein belongs to the MscL family. In terms of assembly, homopentamer.

It localises to the cell membrane. Functionally, channel that opens in response to stretch forces in the membrane lipid bilayer. May participate in the regulation of osmotic pressure changes within the cell. This Clostridium tetani (strain Massachusetts / E88) protein is Large-conductance mechanosensitive channel.